The sequence spans 377 residues: D-alanine--D-alanine ligase (377 aa).

In terms of domain architecture, ATP-grasp spans 141–347 (KRILNQAGIR…YSELIDRLIQ (207 aa)). An ATP-binding site is contributed by 171–226 (KEELGDLVFVKPAKQGSSVGIHKVDTEEEYETAMKDAFTYDYKVLVEAGIKNPREI). Positions 301, 314, and 316 each coordinate Mg(2+).

This sequence belongs to the D-alanine--D-alanine ligase family. The cofactor is Mg(2+). Mn(2+) serves as cofactor.

It is found in the cytoplasm. The catalysed reaction is 2 D-alanine + ATP = D-alanyl-D-alanine + ADP + phosphate + H(+). Its pathway is cell wall biogenesis; peptidoglycan biosynthesis. In terms of biological role, cell wall formation. The chain is D-alanine--D-alanine ligase from Limosilactobacillus fermentum (strain NBRC 3956 / LMG 18251) (Lactobacillus fermentum).